The sequence spans 83 residues: MSSGRLLLLLGLLTLWAELTPVSGLGRPKFCELPPEPGLCNARKTFFYYSLHSHACQKFIYGGCGGNANKFKTIDECHRTCVG.

An N-terminal signal peptide occupies residues 1–25 (MSSGRLLLLLGLLTLWAELTPVSGL). The BPTI/Kunitz inhibitor domain maps to 31–81 (CELPPEPGLCNARKTFFYYSLHSHACQKFIYGGCGGNANKFKTIDECHRTC). 3 disulfides stabilise this stretch: Cys31/Cys81, Cys40/Cys64, and Cys56/Cys77.

Expressed by the venom gland.

Its subcellular location is the secreted. Its function is as follows. Serine protease inhibitor that inhibits chymotrypsin (Ki=3520 nM). The protein is Kunitz-type serine protease inhibitor of Ophiophagus hannah (King cobra).